The following is a 100-amino-acid chain: Large ribosomal subunit protein uL23c (100 aa).

This sequence belongs to the universal ribosomal protein uL23 family. In terms of assembly, part of the 50S ribosomal subunit.

The protein localises to the plastid. The protein resides in the chloroplast. Functionally, binds to 23S rRNA. The chain is Large ribosomal subunit protein uL23c (rpl23) from Euglena gracilis.